A 129-amino-acid chain; its full sequence is Large ribosomal subunit protein bL19 (129 aa).

This sequence belongs to the bacterial ribosomal protein bL19 family.

Functionally, this protein is located at the 30S-50S ribosomal subunit interface and may play a role in the structure and function of the aminoacyl-tRNA binding site. This chain is Large ribosomal subunit protein bL19, found in Burkholderia mallei (strain NCTC 10247).